The following is a 331-amino-acid chain: Vacuolar protein sorting-associated protein 26B (331 aa).

Positions 310-331 (AAQRYEGSNPEPTSAQAKEETD) are disordered.

Belongs to the VPS26 family. Component of the heterotrimeric retromer cargo-selective complex (CSC) which is believed to associate with variable sorting nexins to form functionally distinct retromer complex variants.

Its subcellular location is the cytoplasm. The protein resides in the membrane. The protein localises to the endosome. In terms of biological role, acts as a component of the retromer cargo-selective complex (CSC). The CSC is believed to be the core functional component of retromer or respective retromer complex variants acting to prevent missorting of selected transmembrane cargo proteins into the lysosomal degradation pathway. Retromer mediates retrograde transport of cargo proteins from endosomes to the trans-Golgi network (TGN). The protein is Vacuolar protein sorting-associated protein 26B (vps26b) of Danio rerio (Zebrafish).